Reading from the N-terminus, the 445-residue chain is Putative H/ACA ribonucleoprotein complex subunit 4 (445 aa).

The disordered stretch occupies residues 1–32 (MGKKDKRSKLEGDDLAEAQQKGSFQLPSSNET). The span at 20–32 (QKGSFQLPSSNET) shows a compositional bias: polar residues. Asp-113 serves as the catalytic Nucleophile. In terms of domain architecture, PUA spans 284–359 (HKRVVVKDSC…VVAKSKRVIM (76 aa)). Residues 386-445 (LDKFGKPNDTTPKSWAKEYVQTSTKKEVKKEETPDEEEEEAPKKKSKKSKKQESSDSDSD) are disordered.

The protein belongs to the pseudouridine synthase TruB family. As to quaternary structure, component of the small nucleolar ribonucleoprotein particle containing H/ACA-type snoRNAs (H/ACA snoRNPs).

The protein resides in the nucleus. The protein localises to the nucleolus. It catalyses the reaction a uridine in RNA = a pseudouridine in RNA. Functionally, plays a central role in ribosomal RNA processing. Probable catalytic subunit of H/ACA small nucleolar ribonucleoprotein (H/ACA snoRNP) complex, which catalyzes pseudouridylation of rRNA. This involves the isomerization of uridine such that the ribose is subsequently attached to C5, instead of the normal N1. Pseudouridine ('psi') residues may serve to stabilize the conformation of rRNAs. This chain is Putative H/ACA ribonucleoprotein complex subunit 4, found in Caenorhabditis elegans.